The sequence spans 396 residues: MTEHNIRNFAINFGPQHPAAHGVLRLVLELDGEVVERVDPHIGLLHRGTEKLIEYKTYLQATPYFDRLDYVSPMNQEHAFCLAIEKLAGIEVPRRAQLIRVLFCEIGRLLSHLLNVTTQAMDVGALTPPLWGFEEREKLMIFYERASGARLHANYFRPGGVHQDLPPKLIDDIDAFCDPFLQVVQDLDDLVMANRIFKQRNVDIGIVSVDEAMQWGFSGVMVRGSGIPWDLRKAQPYECYEEMEFDVPVGKNGDTYDRQVIRMEEMRQSVRIMKQCVAKLREPAGQGPIASVDGKFAPPPRREMKRSMEALIHHFKLYTEGFHVPEGEVYAAVEAPKGEFGVYLVSDGTNKPYRCKIRAPGFAHLQAMDWMCRGHLLADVSCVLGTLDIVFGEVDR.

The protein belongs to the complex I 49 kDa subunit family. In terms of assembly, NDH-1 is composed of 14 different subunits. Subunits NuoB, C, D, E, F, and G constitute the peripheral sector of the complex.

It is found in the cell inner membrane. It carries out the reaction a quinone + NADH + 5 H(+)(in) = a quinol + NAD(+) + 4 H(+)(out). In terms of biological role, NDH-1 shuttles electrons from NADH, via FMN and iron-sulfur (Fe-S) centers, to quinones in the respiratory chain. The immediate electron acceptor for the enzyme in this species is believed to be ubiquinone. Couples the redox reaction to proton translocation (for every two electrons transferred, four hydrogen ions are translocated across the cytoplasmic membrane), and thus conserves the redox energy in a proton gradient. The sequence is that of NADH-quinone oxidoreductase subunit D from Methylobacterium radiotolerans (strain ATCC 27329 / DSM 1819 / JCM 2831 / NBRC 15690 / NCIMB 10815 / 0-1).